The chain runs to 67 residues: Large ribosomal subunit protein bL35 (67 aa).

Positions 1–32 are enriched in basic residues; it reads MPKLKNHSGAKKRFAKTATGKYKRRKAGRKHL. A disordered region spans residues 1–54; it reads MPKLKNHSGAKKRFAKTATGKYKRRKAGRKHLLTPQSGSRKREMRQTGIIKPES.

The protein belongs to the bacterial ribosomal protein bL35 family.

The sequence is that of Large ribosomal subunit protein bL35 from Elusimicrobium minutum (strain Pei191).